The primary structure comprises 204 residues: Potassium-transporting ATPase KdpC subunit (204 aa).

Residues 21–41 traverse the membrane as a helical segment; it reads AALVIFVGLSLVTGVLYPVVV.

This sequence belongs to the KdpC family. In terms of assembly, the system is composed of three essential subunits: KdpA, KdpB and KdpC.

It localises to the cell inner membrane. Its function is as follows. Part of the high-affinity ATP-driven potassium transport (or Kdp) system, which catalyzes the hydrolysis of ATP coupled with the electrogenic transport of potassium into the cytoplasm. This subunit acts as a catalytic chaperone that increases the ATP-binding affinity of the ATP-hydrolyzing subunit KdpB by the formation of a transient KdpB/KdpC/ATP ternary complex. In Ralstonia nicotianae (strain ATCC BAA-1114 / GMI1000) (Ralstonia solanacearum), this protein is Potassium-transporting ATPase KdpC subunit.